The sequence spans 91 residues: Small ribosomal subunit protein uS15 (91 aa).

This sequence belongs to the universal ribosomal protein uS15 family. In terms of assembly, part of the 30S ribosomal subunit. Forms a bridge to the 50S subunit in the 70S ribosome, contacting the 23S rRNA.

Functionally, one of the primary rRNA binding proteins, it binds directly to 16S rRNA where it helps nucleate assembly of the platform of the 30S subunit by binding and bridging several RNA helices of the 16S rRNA. Its function is as follows. Forms an intersubunit bridge (bridge B4) with the 23S rRNA of the 50S subunit in the ribosome. The polypeptide is Small ribosomal subunit protein uS15 (Rickettsia canadensis (strain McKiel)).